Here is a 196-residue protein sequence, read N- to C-terminus: Putative HTH-type transcriptional regulator protein PtxE (196 aa).

The region spanning 1–59 (MLNPVWLKSLVAIVQTGSFQSAARALGLAQPTVSQHLQKLEEQVGVTLVQRSRSGCQPT) is the HTH lysR-type domain. Residues 19–38 (FQSAARALGLAQPTVSQHLQ) constitute a DNA-binding region (H-T-H motif).

The protein belongs to the LysR transcriptional regulatory family.

The protein is Putative HTH-type transcriptional regulator protein PtxE (ptxE) of Stutzerimonas stutzeri (Pseudomonas stutzeri).